The following is a 260-amino-acid chain: Glutamate racemase (260 aa).

Substrate-binding positions include 14–15 (DS) and 46–47 (YG). Cys-77 acts as the Proton donor/acceptor in catalysis. Residue 78 to 79 (NT) participates in substrate binding. Residue Cys-188 is the Proton donor/acceptor of the active site. 189 to 190 (TH) provides a ligand contact to substrate.

This sequence belongs to the aspartate/glutamate racemases family.

It carries out the reaction L-glutamate = D-glutamate. It participates in cell wall biogenesis; peptidoglycan biosynthesis. Functionally, provides the (R)-glutamate required for cell wall biosynthesis. The sequence is that of Glutamate racemase from Clostridium perfringens (strain ATCC 13124 / DSM 756 / JCM 1290 / NCIMB 6125 / NCTC 8237 / Type A).